The chain runs to 396 residues: MSQLKLNPYFGEYGGMYVPQILVPALKQLENAFVEAQADESFQAEFTDLLKNYAGRPTALTLTRNLSPNPMVKIYLKREDLLHGGAHKTNQVLGQALLAKRMGKKEIIAETGAGQHGVATALACALLGLKCKVYMGAKDVARQSPNVFRMRLMGAEVIPVTSGSATLKDACNEAMRDWSGSYEKAHYLLGTAAGPHPFPTIVREFQRMIGEETKKQMLEREGRLPDAVIACVGGGSNAIGMFADFIDETSVELIGVEPAGKGIDTHMHGAPLKHGKTGIFFGMKAPLMQDSEGQIEESYSISAGLDFPSVGPQHAHLNAIGRARYESATDDEALEAFQLLARSEGIIPALESAHALAYALRLARECTKETILVVNLSGRGDKDIFTVSDILNGKEE.

Lys88 carries the N6-(pyridoxal phosphate)lysine modification.

The protein belongs to the TrpB family. As to quaternary structure, tetramer of two alpha and two beta chains. Requires pyridoxal 5'-phosphate as cofactor.

The enzyme catalyses (1S,2R)-1-C-(indol-3-yl)glycerol 3-phosphate + L-serine = D-glyceraldehyde 3-phosphate + L-tryptophan + H2O. It participates in amino-acid biosynthesis; L-tryptophan biosynthesis; L-tryptophan from chorismate: step 5/5. The beta subunit is responsible for the synthesis of L-tryptophan from indole and L-serine. This chain is Tryptophan synthase beta chain, found in Shewanella sp. (strain MR-7).